Reading from the N-terminus, the 363-residue chain is Chorismate synthase (363 aa).

R48 and R54 together coordinate NADP(+). FMN is bound by residues 125 to 127 (RSS), 237 to 238 (NA), G277, 292 to 296 (KPTSS), and R318.

The protein belongs to the chorismate synthase family. In terms of assembly, homotetramer. Requires FMNH2 as cofactor.

The catalysed reaction is 5-O-(1-carboxyvinyl)-3-phosphoshikimate = chorismate + phosphate. It participates in metabolic intermediate biosynthesis; chorismate biosynthesis; chorismate from D-erythrose 4-phosphate and phosphoenolpyruvate: step 7/7. In terms of biological role, catalyzes the anti-1,4-elimination of the C-3 phosphate and the C-6 proR hydrogen from 5-enolpyruvylshikimate-3-phosphate (EPSP) to yield chorismate, which is the branch point compound that serves as the starting substrate for the three terminal pathways of aromatic amino acid biosynthesis. This reaction introduces a second double bond into the aromatic ring system. This Pseudomonas paraeruginosa (strain DSM 24068 / PA7) (Pseudomonas aeruginosa (strain PA7)) protein is Chorismate synthase.